Here is a 140-residue protein sequence, read N- to C-terminus: FAD synthase (140 aa).

Residues 9–10 (TF), 14–17 (HPGH), N92, and Y119 contribute to the ATP site.

It belongs to the archaeal FAD synthase family. In terms of assembly, homodimer. A divalent metal cation is required as a cofactor.

The enzyme catalyses FMN + ATP + H(+) = FAD + diphosphate. It functions in the pathway cofactor biosynthesis; FAD biosynthesis; FAD from FMN: step 1/1. Catalyzes the transfer of the AMP portion of ATP to flavin mononucleotide (FMN) to produce flavin adenine dinucleotide (FAD) coenzyme. The sequence is that of FAD synthase from Methanocorpusculum labreanum (strain ATCC 43576 / DSM 4855 / Z).